The primary structure comprises 178 residues: Interleukin-10 (178 aa).

The signal sequence occupies residues 1 to 18 (MHSSALLCCLVFLAGVAA). 2 disulfide bridges follow: Cys30-Cys126 and Cys80-Cys132. Asn134 carries an N-linked (GlcNAc...) asparagine glycan.

This sequence belongs to the IL-10 family. Homodimer. Interacts with IL10RA and IL10RB.

The protein resides in the secreted. In terms of biological role, major immune regulatory cytokine that acts on many cells of the immune system where it has profound anti-inflammatory functions, limiting excessive tissue disruption caused by inflammation. Mechanistically, IL10 binds to its heterotetrameric receptor comprising IL10RA and IL10RB leading to JAK1 and STAT2-mediated phosphorylation of STAT3. In turn, STAT3 translocates to the nucleus where it drives expression of anti-inflammatory mediators. Targets antigen-presenting cells (APCs) such as macrophages and monocytes and inhibits their release of pro-inflammatory cytokines including granulocyte-macrophage colony-stimulating factor /GM-CSF, granulocyte colony-stimulating factor/G-CSF, IL-1 alpha, IL-1 beta, IL-6, IL-8 and TNF-alpha. Also interferes with antigen presentation by reducing the expression of MHC-class II and co-stimulatory molecules, thereby inhibiting their ability to induce T cell activation. In addition, controls the inflammatory response of macrophages by reprogramming essential metabolic pathways including mTOR signaling. The protein is Interleukin-10 (IL10) of Bos taurus (Bovine).